Consider the following 338-residue polypeptide: Ketol-acid reductoisomerase (NADP(+)) (338 aa).

A KARI N-terminal Rossmann domain is found at 1 to 181 (MKVFYDKDCD…GGGRAGIIET (181 aa)). NADP(+)-binding positions include 24–27 (YGSQ), Arg-47, and Ser-52. Residue His-107 is part of the active site. Residue Gly-133 coordinates NADP(+). A KARI C-terminal knotted domain is found at 182–327 (NFREETETDL…AKLRAMMPWI (146 aa)). Residues Asp-190, Glu-194, Glu-226, and Glu-230 each coordinate Mg(2+). Position 251 (Ser-251) interacts with substrate.

Belongs to the ketol-acid reductoisomerase family. It depends on Mg(2+) as a cofactor.

The enzyme catalyses (2R)-2,3-dihydroxy-3-methylbutanoate + NADP(+) = (2S)-2-acetolactate + NADPH + H(+). It catalyses the reaction (2R,3R)-2,3-dihydroxy-3-methylpentanoate + NADP(+) = (S)-2-ethyl-2-hydroxy-3-oxobutanoate + NADPH + H(+). The protein operates within amino-acid biosynthesis; L-isoleucine biosynthesis; L-isoleucine from 2-oxobutanoate: step 2/4. It participates in amino-acid biosynthesis; L-valine biosynthesis; L-valine from pyruvate: step 2/4. Its function is as follows. Involved in the biosynthesis of branched-chain amino acids (BCAA). Catalyzes an alkyl-migration followed by a ketol-acid reduction of (S)-2-acetolactate (S2AL) to yield (R)-2,3-dihydroxy-isovalerate. In the isomerase reaction, S2AL is rearranged via a Mg-dependent methyl migration to produce 3-hydroxy-3-methyl-2-ketobutyrate (HMKB). In the reductase reaction, this 2-ketoacid undergoes a metal-dependent reduction by NADPH to yield (R)-2,3-dihydroxy-isovalerate. In Janthinobacterium sp. (strain Marseille) (Minibacterium massiliensis), this protein is Ketol-acid reductoisomerase (NADP(+)).